The following is a 397-amino-acid chain: 2-acyl-1-lysophosphatidylinositol acyltransferase (397 aa).

The HXXXXD motif motif lies at 112–117 (HQIYTD).

Belongs to the 1-acyl-sn-glycerol-3-phosphate acyltransferase family.

It is found in the lipid droplet. It carries out the reaction 1-heptadecanoyl-sn-glycero-3-phosphate + octadecanoyl-CoA = 1-heptadecanoyl-2-octadecanoyl-sn-glycero-3-phosphate + CoA. It catalyses the reaction 1-heptadecanoyl-sn-glycero-3-phosphate + tetradecanoyl-CoA = 1-heptadecanoyl-2-tetradecanoyl-sn-glycero-3-phosphate + CoA. The enzyme catalyses 1-heptadecanoyl-sn-glycero-3-phosphate + hexadecanoyl-CoA = 1-heptadecanoyl-2-hexadecanoyl-sn-glycero-3-phosphate + CoA. Its function is as follows. Acyltransferase with lysophosphatidic acid acyltransferase (LPAAT) activity. Fatty acyl substrates include 18:0-acyl-CoA, 16:0-acyl-CoA, 17:0-acyl-CoA and 14:0-acyl-CoA. Responsible for the acyl-CoA-dependent introduction of saturated very long chain fatty acids (VLCFAs) into phosphatidylinositol, transferring saturated FAs with 18 to 26 carbon atoms. Responsible for the incorporation of stearate into phosphatidylinositol. Overexpression has an effect on chromosome stability. Regulates phosphorylation and expression of glycerol-3-phosphate acyltransferase SCT1. The sequence is that of 2-acyl-1-lysophosphatidylinositol acyltransferase from Saccharomyces cerevisiae (strain ATCC 204508 / S288c) (Baker's yeast).